Consider the following 309-residue polypeptide: uncharacterized protein (309 aa).

The interval 272–291 (PSLDAPSETVEAFPEPQKNL) is disordered.

This is an uncharacterized protein from Bacillus subtilis (strain 168).